A 160-amino-acid polypeptide reads, in one-letter code: Protein MGF 300-2R (160 aa).

This sequence belongs to the asfivirus MGF 300 family.

Functionally, plays a role in virus cell tropism, and may be required for efficient virus replication in macrophages. The protein is Protein MGF 300-2R of African swine fever virus (isolate Tick/Malawi/Lil 20-1/1983) (ASFV).